The primary structure comprises 55 residues: Protein CADMIUM TOLERANCE 1 (55 aa).

Residues 24 to 40 (GCLYACIFTALCCFCCY) traverse the membrane as a helical segment.

The protein belongs to the CYSTM1 family.

It localises to the cell membrane. The protein resides in the secreted. It is found in the cell wall. Its function is as follows. Confers resistance to heavy metal ions (e.g. cadmium (CdCl(2)) and copper (CuCl(2))) by chelating them at the plasma membrane of root cells, thus stopping their entry and reducing their accumulation. Binds to aluminium (Al). This is Protein CADMIUM TOLERANCE 1 from Oryza sativa subsp. indica (Rice).